The chain runs to 111 residues: UPF0342 protein SAG1376 (111 aa).

The segment covering 52–63 (QEMMQSGQMPSQ) has biased composition (polar residues). A disordered region spans residues 52-71 (QEMMQSGQMPSQEEQDEMSK).

It belongs to the UPF0342 family.

This is UPF0342 protein SAG1376 from Streptococcus agalactiae serotype V (strain ATCC BAA-611 / 2603 V/R).